Consider the following 239-residue polypeptide: DNA damage-regulated autophagy modulator protein 1 (239 aa).

6 helical membrane-spanning segments follow: residues 15 to 35, 54 to 74, 91 to 111, 119 to 139, 162 to 182, and 201 to 221; these read ILVI…VLIG, SGVF…TMYT, IYFN…MGIV, VPAV…MYIL, MTVS…SILS, and TSAI…LTFI.

Belongs to the DRAM/TMEM150 family.

The protein localises to the lysosome membrane. Its function is as follows. Lysosomal modulator of autophagy that plays a central role in p53/TP53-mediated apoptosis. This Xenopus laevis (African clawed frog) protein is DNA damage-regulated autophagy modulator protein 1 (dram1).